A 254-amino-acid chain; its full sequence is 5'-nucleotidase SurE (254 aa).

4 residues coordinate a divalent metal cation: D8, D9, S40, and N93.

It belongs to the SurE nucleotidase family. Requires a divalent metal cation as cofactor.

It is found in the cytoplasm. The catalysed reaction is a ribonucleoside 5'-phosphate + H2O = a ribonucleoside + phosphate. Its function is as follows. Nucleotidase that shows phosphatase activity on nucleoside 5'-monophosphates. This is 5'-nucleotidase SurE from Methylorubrum populi (strain ATCC BAA-705 / NCIMB 13946 / BJ001) (Methylobacterium populi).